We begin with the raw amino-acid sequence, 48 residues long: Gas vesicle protein A (48 aa).

Belongs to the gas vesicle GvpA family. As to quaternary structure, the gas vesicle shell is 2 nm thick and consists of a single layer of this protein. It forms helical ribs nearly perpendicular to the long axis of the vesicle.

It is found in the gas vesicle shell. Functionally, gas vesicles are hollow, gas filled proteinaceous nanostructures found in some microorganisms. During planktonic growth they allow positioning of the organism at a favorable depth for light or nutrient acquisition. GvpA forms the protein shell. The sequence is that of Gas vesicle protein A from Spirulina sp. (strain CCAP 1475/10).